The chain runs to 172 residues: MGYEEIKNTIATIEDFPKKGISFKDITPLLLDHKKMNFIIDELAKFAKTIDFDIIVAPESRGFLFGLPLALNLKKPFVPIRKKGKLPREVISQEYELEYGKATIEVTKNDIPANSKVLIIDDLIATGGTTVAIQDLVTKLGSTVVGQAYLIELVGLCDYEKLQGKFFSMIKY.

The protein belongs to the purine/pyrimidine phosphoribosyltransferase family. In terms of assembly, homodimer.

It localises to the cytoplasm. It catalyses the reaction AMP + diphosphate = 5-phospho-alpha-D-ribose 1-diphosphate + adenine. The protein operates within purine metabolism; AMP biosynthesis via salvage pathway; AMP from adenine: step 1/1. In terms of biological role, catalyzes a salvage reaction resulting in the formation of AMP, that is energically less costly than de novo synthesis. This chain is Adenine phosphoribosyltransferase, found in Malacoplasma penetrans (strain HF-2) (Mycoplasma penetrans).